The primary structure comprises 483 residues: Salicylaldehyde dehydrogenase (483 aa).

Gly228–Gly233 is a binding site for NAD(+). Residues Glu250 and Cys284 contribute to the active site.

It belongs to the aldehyde dehydrogenase family.

The enzyme catalyses salicylaldehyde + NAD(+) + H2O = salicylate + NADH + 2 H(+). It functions in the pathway aromatic compound metabolism; naphthalene degradation. This chain is Salicylaldehyde dehydrogenase (nahF), found in Pseudomonas putida (Arthrobacter siderocapsulatus).